A 345-amino-acid chain; its full sequence is Phosphoribosylformylglycinamidine cyclo-ligase (345 aa).

It belongs to the AIR synthase family.

The protein localises to the cytoplasm. The catalysed reaction is 2-formamido-N(1)-(5-O-phospho-beta-D-ribosyl)acetamidine + ATP = 5-amino-1-(5-phospho-beta-D-ribosyl)imidazole + ADP + phosphate + H(+). Its pathway is purine metabolism; IMP biosynthesis via de novo pathway; 5-amino-1-(5-phospho-D-ribosyl)imidazole from N(2)-formyl-N(1)-(5-phospho-D-ribosyl)glycinamide: step 2/2. The polypeptide is Phosphoribosylformylglycinamidine cyclo-ligase (Salmonella typhi).